A 192-amino-acid polypeptide reads, in one-letter code: UPF0149 protein YgfB (192 aa).

This sequence belongs to the UPF0149 family.

The sequence is that of UPF0149 protein YgfB from Salmonella agona (strain SL483).